The following is a 199-amino-acid chain: Urease accessory protein UreG (199 aa).

GTP is bound at residue 8 to 15 (GPVGSGKT).

This sequence belongs to the SIMIBI class G3E GTPase family. UreG subfamily. As to quaternary structure, homodimer. UreH, UreF and UreG form a complex that acts as a GTP-hydrolysis-dependent molecular chaperone, activating the urease apoprotein by helping to assemble the nickel containing metallocenter of UreC. The UreE protein probably delivers the nickel.

It is found in the cytoplasm. Its function is as follows. Facilitates the functional incorporation of the urease nickel metallocenter. This process requires GTP hydrolysis, probably effectuated by UreG. The polypeptide is Urease accessory protein UreG (Helicobacter pylori (strain P12)).